Consider the following 306-residue polypeptide: UDP-3-O-acyl-N-acetylglucosamine deacetylase (306 aa).

Zn(2+) is bound by residues His-79, His-238, and Asp-242. Residue His-265 is the Proton donor of the active site.

It belongs to the LpxC family. Zn(2+) is required as a cofactor.

It catalyses the reaction a UDP-3-O-[(3R)-3-hydroxyacyl]-N-acetyl-alpha-D-glucosamine + H2O = a UDP-3-O-[(3R)-3-hydroxyacyl]-alpha-D-glucosamine + acetate. Its pathway is glycolipid biosynthesis; lipid IV(A) biosynthesis; lipid IV(A) from (3R)-3-hydroxytetradecanoyl-[acyl-carrier-protein] and UDP-N-acetyl-alpha-D-glucosamine: step 2/6. In terms of biological role, catalyzes the hydrolysis of UDP-3-O-myristoyl-N-acetylglucosamine to form UDP-3-O-myristoylglucosamine and acetate, the committed step in lipid A biosynthesis. In Shewanella frigidimarina (strain NCIMB 400), this protein is UDP-3-O-acyl-N-acetylglucosamine deacetylase.